Reading from the N-terminus, the 155-residue chain is Ribosomal RNA large subunit methyltransferase H (155 aa).

S-adenosyl-L-methionine is bound by residues leucine 72, glycine 103, and leucine 122 to leucine 127.

It belongs to the RNA methyltransferase RlmH family. Homodimer.

The protein localises to the cytoplasm. It catalyses the reaction pseudouridine(1915) in 23S rRNA + S-adenosyl-L-methionine = N(3)-methylpseudouridine(1915) in 23S rRNA + S-adenosyl-L-homocysteine + H(+). Specifically methylates the pseudouridine at position 1915 (m3Psi1915) in 23S rRNA. The chain is Ribosomal RNA large subunit methyltransferase H from Haemophilus influenzae (strain PittGG).